Here is a 150-residue protein sequence, read N- to C-terminus: SKP1-like protein 17 (150 aa).

The segment at 92 to 150 (LDAADYLIVIGLKNLIAQAIADYTADKTVNEIRELFNIENDYTPEEEEELRKKNEWAFN) is interaction with the F-box domain of F-box proteins.

The protein belongs to the SKP1 family. Part of a SCF (SKP1-cullin-F-box) protein ligase complex. Interacts with CPR1/CPR30. Mainly detected in the siliques.

The protein resides in the nucleus. It functions in the pathway protein modification; protein ubiquitination. Its function is as follows. Involved in ubiquitination and subsequent proteasomal degradation of target proteins. Together with CUL1, RBX1 and a F-box protein, it forms a SCF E3 ubiquitin ligase complex. The functional specificity of this complex depends on the type of F-box protein. In the SCF complex, it serves as an adapter that links the F-box protein to CUL1. Probably implicated in incompatibility response after hybridization. The polypeptide is SKP1-like protein 17 (ASK17) (Arabidopsis thaliana (Mouse-ear cress)).